A 327-amino-acid chain; its full sequence is Urokinase plasminogen activator surface receptor (327 aa).

A signal peptide spans M1–G23. UPAR/Ly6 domains are found at residues L24–L117, L117–G212, and F213–G298. Disulfide bonds link C26-C47, C29-C35, and C40-C68. Residue N32 is glycosylated (N-linked (GlcNAc...) asparagine). N-linked (GlcNAc...) asparagine glycosylation is present at N75. Disulfide bonds link C94–C99, C119–C146, C122–C129, C139–C168, C174–C191, C192–C197, C215–C243, C218–C226, C236–C262, C268–C287, and C288–C293. N183, N193, N221, N254, and N282 each carry an N-linked (GlcNAc...) asparagine glycan. G298 is lipidated: GPI-anchor amidated glycine. Residues G299–T327 constitute a propeptide, removed in mature form.

In terms of assembly, monomer. Interacts (via the UPAR/Ly6 domains) with SRPX2. Interacts with MRC2. Interacts with SORL1 (via N-terminal ectodomain); this interaction decreases PLAUR internalization. The ternary complex composed of PLAUR-PLAU-SERPINE1 also interacts with SORL1. Interacts with CD82; this interaction prevents PLAUR from binding to its high affinity ligand PLAU. As to expression, expressed in angiogenic endothelial cells (at protein level).

The protein localises to the cell membrane. It localises to the secreted. Its function is as follows. Acts as a receptor for urokinase plasminogen activator. Plays a role in localizing and promoting plasmin formation. Mediates the proteolysis-independent signal transduction activation effects of U-PA. This is Urokinase plasminogen activator surface receptor (Plaur) from Mus musculus (Mouse).